The chain runs to 104 residues: Large ribosomal subunit protein uL24 (104 aa).

The protein belongs to the universal ribosomal protein uL24 family. In terms of assembly, part of the 50S ribosomal subunit.

In terms of biological role, one of two assembly initiator proteins, it binds directly to the 5'-end of the 23S rRNA, where it nucleates assembly of the 50S subunit. One of the proteins that surrounds the polypeptide exit tunnel on the outside of the subunit. The chain is Large ribosomal subunit protein uL24 from Corynebacterium diphtheriae (strain ATCC 700971 / NCTC 13129 / Biotype gravis).